Reading from the N-terminus, the 280-residue chain is Aspartate/glutamate leucyltransferase (280 aa).

This sequence belongs to the R-transferase family. Bpt subfamily.

It localises to the cytoplasm. It carries out the reaction N-terminal L-glutamyl-[protein] + L-leucyl-tRNA(Leu) = N-terminal L-leucyl-L-glutamyl-[protein] + tRNA(Leu) + H(+). The catalysed reaction is N-terminal L-aspartyl-[protein] + L-leucyl-tRNA(Leu) = N-terminal L-leucyl-L-aspartyl-[protein] + tRNA(Leu) + H(+). In terms of biological role, functions in the N-end rule pathway of protein degradation where it conjugates Leu from its aminoacyl-tRNA to the N-termini of proteins containing an N-terminal aspartate or glutamate. The sequence is that of Aspartate/glutamate leucyltransferase from Cereibacter sphaeroides (strain KD131 / KCTC 12085) (Rhodobacter sphaeroides).